The sequence spans 461 residues: Cysteine--tRNA ligase (461 aa).

A Zn(2+)-binding site is contributed by Cys-28. Residues 30–40 (ITVYDLCHIGH) carry the 'HIGH' region motif. Positions 209, 234, and 238 each coordinate Zn(2+). Positions 266-270 (KMSKS) match the 'KMSKS' region motif. Lys-269 is a binding site for ATP.

The protein belongs to the class-I aminoacyl-tRNA synthetase family. As to quaternary structure, monomer. Zn(2+) serves as cofactor.

It localises to the cytoplasm. The catalysed reaction is tRNA(Cys) + L-cysteine + ATP = L-cysteinyl-tRNA(Cys) + AMP + diphosphate. This chain is Cysteine--tRNA ligase, found in Escherichia coli (strain 55989 / EAEC).